A 459-amino-acid chain; its full sequence is Interleukin-1 receptor-associated kinase 4 (459 aa).

The residue at position 1 (Met-1) is an N-acetylmethionine. The 85-residue stretch at Arg-20–Ala-104 folds into the Death domain. N6-acetyllysine is present on Lys-34. The interval Arg-115–Ser-161 is disordered. A Protein kinase domain is found at Ser-186 to Leu-454. Residues Met-192–Val-200 and Lys-213 contribute to the ATP site. The active-site Proton acceptor is the Asp-311. ATP is bound by residues Lys-313–Asn-316 and Asp-329. Phosphothreonine occurs at positions 342 and 345. At Ser-346 the chain carries Phosphoserine.

Belongs to the protein kinase superfamily. TKL Ser/Thr protein kinase family. Pelle subfamily. Associates with MYD88 and IRAK2 to form a ternary complex called the Myddosome. Once phosphorylated, IRAK4 dissociates from the receptor complex and then associates with the TNF receptor-associated factor 6 (TRAF6), IRAK1, and PELI1; this intermediate complex is required for subsequent NF-kappa-B activation. Direct binding of SMAD6 to PELI1 prevents complex formation and hence negatively regulates IL1R-TLR signaling and eventually NF-kappa-B-mediated gene expression. Interacts with IL1RL1. Interacts (when phosphorylated) with IRAK1. May interact (when phosphorylated) with IRAK3. Requires Mg(2+) as cofactor. In terms of processing, phosphorylated.

The protein resides in the cytoplasm. The catalysed reaction is L-seryl-[protein] + ATP = O-phospho-L-seryl-[protein] + ADP + H(+). It catalyses the reaction L-threonyl-[protein] + ATP = O-phospho-L-threonyl-[protein] + ADP + H(+). In terms of biological role, serine/threonine-protein kinase that plays a critical role in initiating innate immune response against foreign pathogens. Involved in Toll-like receptor (TLR) and IL-1R signaling pathways. Is rapidly recruited by MYD88 to the receptor-signaling complex upon TLR activation to form the Myddosome together with IRAK2. Phosphorylates initially IRAK1, thus stimulating the kinase activity and intensive autophosphorylation of IRAK1. Phosphorylates E3 ubiquitin ligases Pellino proteins (PELI1, PELI2 and PELI3) to promote pellino-mediated polyubiquitination of IRAK1. Then, the ubiquitin-binding domain of IKBKG/NEMO binds to polyubiquitinated IRAK1 bringing together the IRAK1-MAP3K7/TAK1-TRAF6 complex and the NEMO-IKKA-IKKB complex. In turn, MAP3K7/TAK1 activates IKKs (CHUK/IKKA and IKBKB/IKKB) leading to NF-kappa-B nuclear translocation and activation. Alternatively, phosphorylates TIRAP to promote its ubiquitination and subsequent degradation. Phosphorylates NCF1 and regulates NADPH oxidase activation after LPS stimulation suggesting a similar mechanism during microbial infections. The protein is Interleukin-1 receptor-associated kinase 4 (Irak4) of Mus musculus (Mouse).